The sequence spans 178 residues: Neuroblastoma suppressor of tumorigenicity 1 (178 aa).

The N-terminal stretch at 1–16 is a signal peptide; sequence MLWVLVGTVLPVMLLA. 5 disulfide bridges follow: cysteine 34/cysteine 84, cysteine 48/cysteine 98, cysteine 58/cysteine 117, cysteine 62/cysteine 119, and cysteine 81/cysteine 122. The region spanning 34–123 is the CTCK domain; that stretch reads CEAKNITQIV…IVHCSCQACG (90 aa). Residues 130–178 form a disordered region; sequence GLNVYMQGEDGPGSQPGSHSHSHPHPGCQTPEPEEPPGAPQVEEEGAED.

Belongs to the DAN family. Homodimer. Most abundant in lung, brain, intestine and kidney.

It is found in the secreted. Its function is as follows. Possible candidate as a tumor suppressor gene of neuroblastoma. May play an important role in preventing cells from entering the final stage (G1/S) of the transformation process. In Rattus norvegicus (Rat), this protein is Neuroblastoma suppressor of tumorigenicity 1 (Nbl1).